The chain runs to 535 residues: ATP-dependent RNA helicase DBP3 (535 aa).

Over residues 1–21 the composition is skewed to basic and acidic residues; that stretch reads MSKHELKDKKRKSVDGEDVSK. Positions 1 to 82 are disordered; sequence MSKHELKDKK…GSETAPVGDS (82 aa). The span at 22 to 33 shows a compositional bias: basic residues; it reads SKKVKKDKKDKK. Positions 34–72 are enriched in basic and acidic residues; sequence DKKAKDGNDKVKDKKDKNKKDKSKTDKNLKEVQETEAHT. The Q motif motif lies at 125-151; the sequence is LSFSHLNLHSAIQKEISKFPKPTPIQA. In terms of domain architecture, Helicase ATP-binding spans 154–327; it reads WPYLLAGKDV…STFMRAPVKV (174 aa). 167 to 174 is an ATP binding site; it reads AETGSGKT. A DEAD box motif is present at residues 274–277; the sequence is DEAD. One can recognise a Helicase C-terminal domain in the interval 352–505; it reads KKEKRLLELL…PVPEELMKFG (154 aa).

This sequence belongs to the DEAD box helicase family. DDX5/DBP2 subfamily.

It localises to the nucleus. It is found in the nucleolus. It catalyses the reaction ATP + H2O = ADP + phosphate + H(+). Functionally, ATP-dependent RNA helicase required for 60S ribosomal subunit synthesis. Involved in efficient pre-rRNA processing, predominantly at site A3, which is necessary for the normal formation of 25S and 5.8S rRNAs. This chain is ATP-dependent RNA helicase DBP3 (DBP3), found in Eremothecium gossypii (strain ATCC 10895 / CBS 109.51 / FGSC 9923 / NRRL Y-1056) (Yeast).